The sequence spans 401 residues: MQKLTILGATGSIGASTLKVVEQNPELFSVVALAAGTNVEKMVALCRQWQPKFAVMADKAAAVALQSEIHTISPNTEVLGGVDALCHVASLEEVDSVMAAIVGAAGLLPTMAAVKAGKRVLLANKEALVMSGQLFIDAVEQYGAELLPVDSEHNAIFQCLPQQVQTNLGRCNLDEHGISSILLTGSGGPFRYADIADLDSVTPAQAIAHPNWSMGPKISVDSATMMNKGLEYIEAKWLFNAARDQLKVIIHPQSVIHSMVQYRDGSVLAQMGEPDMATPIALTMSYPSRVDAGVKPLDFTQVGELTFLQPDFARYPCLKLAIDACYEGQHATTALNAANEVAVDAFLNNRLGFTDIARINELVLHKITASCKPENANSLESLLELDRMSRTIALEIIRERS.

Residues T10, G11, S12, I13, G36, N38, and N124 each coordinate NADPH. K125 serves as a coordination point for 1-deoxy-D-xylulose 5-phosphate. E126 is an NADPH binding site. A Mn(2+)-binding site is contributed by D150. 1-deoxy-D-xylulose 5-phosphate contacts are provided by S151, E152, S186, and H209. Mn(2+) is bound at residue E152. NADPH is bound at residue G215. 1-deoxy-D-xylulose 5-phosphate-binding residues include S222, N227, K228, and E231. E231 is a Mn(2+) binding site.

This sequence belongs to the DXR family. Mg(2+) serves as cofactor. The cofactor is Mn(2+).

The enzyme catalyses 2-C-methyl-D-erythritol 4-phosphate + NADP(+) = 1-deoxy-D-xylulose 5-phosphate + NADPH + H(+). Its pathway is isoprenoid biosynthesis; isopentenyl diphosphate biosynthesis via DXP pathway; isopentenyl diphosphate from 1-deoxy-D-xylulose 5-phosphate: step 1/6. Catalyzes the NADPH-dependent rearrangement and reduction of 1-deoxy-D-xylulose-5-phosphate (DXP) to 2-C-methyl-D-erythritol 4-phosphate (MEP). The polypeptide is 1-deoxy-D-xylulose 5-phosphate reductoisomerase (Vibrio parahaemolyticus serotype O3:K6 (strain RIMD 2210633)).